The chain runs to 522 residues: E3 ubiquitin-protein ligase TRIM65 (522 aa).

Ala2 is modified (N-acetylalanine). The RING-type zinc-finger motif lies at 13–52; sequence CSICLGRYRDPVTLPCGHSFCGNCIQDSWRSCEKSCPECR. The B box-type zinc-finger motif lies at 92-134; that stretch reads SHSARCLRHGRPLEFFCRTEGLCVCSACTVHDCSHHERALLDV. Residues 141–229 adopt a coiled-coil conformation; it reads DQLRARVLVT…QRLTDHLRAL (89 aa). Phosphoserine is present on Ser187. In terms of domain architecture, B30.2/SPRY spans 316 to 509; that stretch reads APVPSAVCPL…LTLCHQPEAT (194 aa).

It belongs to the TRIM/RBCC family. As to quaternary structure, homo-multimerizes. Interacts with ARRDC4.

The protein resides in the cytoplasm. The catalysed reaction is S-ubiquitinyl-[E2 ubiquitin-conjugating enzyme]-L-cysteine + [acceptor protein]-L-lysine = [E2 ubiquitin-conjugating enzyme]-L-cysteine + N(6)-ubiquitinyl-[acceptor protein]-L-lysine.. It participates in protein modification; protein ubiquitination. Its function is as follows. E3 ubiquitin ligase that plays a role in several processes including innate immnity, autophagy or inflammation. Negatively regulates miRNAs by modulating the ubiquitination and stability of TNRC6A, a protein involved in RNA-mediated gene silencing by both micro-RNAs (miRNAs) and short interfering RNAs. This ubiquitination results in the suppressed expression of miR-138-5p leading to increased autophagy. Upon enteroviral infection, promotes 'Lys-63'-mediated ubiquitination activation of IFIH1/MDA5 leading to innate signaling cascade. Mechanistically, selectively recognizes MDA5 filaments that occur on dsRNAs. Also plays a role in limitation of inflammation through different mechanisms. First, promotes 'Lys-48'-mediated ubiquitination of VCAM1 leading to its degradation and limitation of LPS-induced lung inflammation. In addition, negatively regulates inflammasome activation by promoting 'lys48'-linked ubiquitination of NLRP3 which is critical for the inhibition of NLRP3 inflammasome activation in resting macrophages. In Mus musculus (Mouse), this protein is E3 ubiquitin-protein ligase TRIM65 (Trim65).